The primary structure comprises 334 residues: Ketol-acid reductoisomerase (NADP(+)) (334 aa).

The 181-residue stretch at 1–181 folds into the KARI N-terminal Rossmann domain; sequence MTTVYYDQSV…GATRAGVLET (181 aa). NADP(+)-binding positions include 25 to 28, Arg-48, Ser-52, and 82 to 85; these read YGSQ and DEIQ. His-107 is a catalytic residue. Gly-133 contributes to the NADP(+) binding site. Positions 182–327 constitute a KARI C-terminal knotted domain; that stretch reads SFKEETETDL…RELRDMMPFI (146 aa). Mg(2+) is bound by residues Asp-190, Glu-194, Glu-226, and Glu-230. Ser-251 is a binding site for substrate.

Belongs to the ketol-acid reductoisomerase family. It depends on Mg(2+) as a cofactor.

The enzyme catalyses (2R)-2,3-dihydroxy-3-methylbutanoate + NADP(+) = (2S)-2-acetolactate + NADPH + H(+). It carries out the reaction (2R,3R)-2,3-dihydroxy-3-methylpentanoate + NADP(+) = (S)-2-ethyl-2-hydroxy-3-oxobutanoate + NADPH + H(+). It functions in the pathway amino-acid biosynthesis; L-isoleucine biosynthesis; L-isoleucine from 2-oxobutanoate: step 2/4. The protein operates within amino-acid biosynthesis; L-valine biosynthesis; L-valine from pyruvate: step 2/4. Its function is as follows. Involved in the biosynthesis of branched-chain amino acids (BCAA). Catalyzes an alkyl-migration followed by a ketol-acid reduction of (S)-2-acetolactate (S2AL) to yield (R)-2,3-dihydroxy-isovalerate. In the isomerase reaction, S2AL is rearranged via a Mg-dependent methyl migration to produce 3-hydroxy-3-methyl-2-ketobutyrate (HMKB). In the reductase reaction, this 2-ketoacid undergoes a metal-dependent reduction by NADPH to yield (R)-2,3-dihydroxy-isovalerate. This is Ketol-acid reductoisomerase (NADP(+)) from Staphylococcus saprophyticus subsp. saprophyticus (strain ATCC 15305 / DSM 20229 / NCIMB 8711 / NCTC 7292 / S-41).